The following is an 882-amino-acid chain: Ion channel DMI1 (882 aa).

Residues 1–122 (MAKSNEESSN…PSSSSITKQQ (122 aa)) are disordered. Residues 48-62 (TSTTKTDFSEQQWNY) are compositionally biased toward polar residues. Positions 78–95 (PPPPPSKPPVNLIPPHPR) are enriched in pro residues. Residues 107–117 (SSLLPQPSSSS) are compositionally biased toward low complexity. A run of 4 helical transmembrane segments spans residues 129 to 149 (SPIFYLLVICCIILVPYSAYL), 192 to 212 (TIALYIVLFTLILPFVLYKYL), 255 to 275 (LALLCATLFLIAFGGLALYAV), and 307 to 327 (IVSVSISAGGMLIFAMMLGLV). RCK N-terminal domains lie at 348 to 489 (RNHV…ETVV) and 608 to 757 (PEKI…DKSI). A coiled-coil region spans residues 378-403 (VIVVLAEKEKEEMEMDIAKLEFDFMG).

It belongs to the castor/pollux (TC 1.A.1.23) family. In terms of assembly, interacts (via c-terminus) with CNGC15A, CNGC15B and CNGC15C (via N-terminus). The Nod factor has no effect on these interactions, implying that the complex is maintained after activation. Mainly expressed in roots and nodules. Also detected in pods, flowers, leaves, and stems.

Its subcellular location is the nucleus membrane. In terms of biological role, required for early signal transduction events leading to endosymbiosis. Acts early in a signal transduction chain leading from the perception of Nod factor to the activation of calcium spiking. Also involved in mycorrhizal symbiosis. May be involved in the regulation of the calcium channel responsible for calcium spiking by mobilizing another cation, and thereby altering the membrane potential. This Medicago truncatula (Barrel medic) protein is Ion channel DMI1.